Consider the following 492-residue polypeptide: 2,3-bisphosphoglycerate-independent phosphoglycerate mutase (492 aa).

Mn(2+) is bound by residues Asp11 and Ser61. Ser61 acts as the Phosphoserine intermediate in catalysis. Residues His118, 147–148 (RD), Arg178, Arg184, 248–251 (RNDR), and Lys320 contribute to the substrate site. Positions 386, 390, 427, 428, and 445 each coordinate Mn(2+).

This sequence belongs to the BPG-independent phosphoglycerate mutase family. Monomer. It depends on Mn(2+) as a cofactor.

The catalysed reaction is (2R)-2-phosphoglycerate = (2R)-3-phosphoglycerate. The protein operates within carbohydrate degradation; glycolysis; pyruvate from D-glyceraldehyde 3-phosphate: step 3/5. Functionally, catalyzes the interconversion of 2-phosphoglycerate and 3-phosphoglycerate. This Campylobacter jejuni subsp. jejuni serotype O:6 (strain 81116 / NCTC 11828) protein is 2,3-bisphosphoglycerate-independent phosphoglycerate mutase.